A 366-amino-acid polypeptide reads, in one-letter code: Phenylalanine--tRNA ligase alpha subunit (366 aa).

Glu259 contributes to the Mg(2+) binding site.

This sequence belongs to the class-II aminoacyl-tRNA synthetase family. Phe-tRNA synthetase alpha subunit type 1 subfamily. Tetramer of two alpha and two beta subunits. It depends on Mg(2+) as a cofactor.

Its subcellular location is the cytoplasm. It catalyses the reaction tRNA(Phe) + L-phenylalanine + ATP = L-phenylalanyl-tRNA(Phe) + AMP + diphosphate + H(+). This is Phenylalanine--tRNA ligase alpha subunit from Novosphingobium aromaticivorans (strain ATCC 700278 / DSM 12444 / CCUG 56034 / CIP 105152 / NBRC 16084 / F199).